The primary structure comprises 442 residues: Protein translocase subunit SecY (442 aa).

Transmembrane regions (helical) follow at residues 24-44 (FLFL…PGIN), 76-96 (IFAL…LMTA), 125-145 (VLAL…GVAF), 149-169 (FGFY…MMWL), 178-198 (VGNG…PRAI), 212-232 (IFAL…VVFI), 269-289 (VIPA…GSWF), 312-332 (NILL…ALMF), 363-383 (GVLT…CLLP), and 385-405 (FLVV…LIVV).

It belongs to the SecY/SEC61-alpha family. Component of the Sec protein translocase complex. Heterotrimer consisting of SecY, SecE and SecG subunits. The heterotrimers can form oligomers, although 1 heterotrimer is thought to be able to translocate proteins. Interacts with the ribosome. Interacts with SecDF, and other proteins may be involved. Interacts with SecA.

The protein resides in the cell inner membrane. Its function is as follows. The central subunit of the protein translocation channel SecYEG. Consists of two halves formed by TMs 1-5 and 6-10. These two domains form a lateral gate at the front which open onto the bilayer between TMs 2 and 7, and are clamped together by SecE at the back. The channel is closed by both a pore ring composed of hydrophobic SecY resides and a short helix (helix 2A) on the extracellular side of the membrane which forms a plug. The plug probably moves laterally to allow the channel to open. The ring and the pore may move independently. This Pseudomonas aeruginosa (strain ATCC 15692 / DSM 22644 / CIP 104116 / JCM 14847 / LMG 12228 / 1C / PRS 101 / PAO1) protein is Protein translocase subunit SecY.